A 183-amino-acid polypeptide reads, in one-letter code: Cell division protein SepF (183 aa).

Residues 13–58 (MHDDDDFDDDYEDYDDDFDEDYEDDKPSARKRLFTGSSKKDSVADE) form a disordered region. Residues 16–36 (DDDFDDDYEDYDDDFDEDYED) show a composition bias toward acidic residues.

The protein belongs to the SepF family. As to quaternary structure, homodimer. Interacts with FtsZ.

Its subcellular location is the cytoplasm. Its function is as follows. Cell division protein that is part of the divisome complex and is recruited early to the Z-ring. Probably stimulates Z-ring formation, perhaps through the cross-linking of FtsZ protofilaments. Its function overlaps with FtsA. The sequence is that of Cell division protein SepF from Lachnospira eligens (strain ATCC 27750 / DSM 3376 / VPI C15-48 / C15-B4) (Eubacterium eligens).